Reading from the N-terminus, the 541-residue chain is Light-independent protochlorophyllide reductase subunit B (541 aa).

Asp-36 lines the [4Fe-4S] cluster pocket. The Proton donor role is filled by Asp-287. Position 422–423 (422–423) interacts with substrate; the sequence is GL.

Belongs to the ChlB/BchB/BchZ family. In terms of assembly, protochlorophyllide reductase is composed of three subunits; BchL, BchN and BchB. Forms a heterotetramer of two BchB and two BchN subunits. [4Fe-4S] cluster serves as cofactor.

It carries out the reaction chlorophyllide a + oxidized 2[4Fe-4S]-[ferredoxin] + 2 ADP + 2 phosphate = protochlorophyllide a + reduced 2[4Fe-4S]-[ferredoxin] + 2 ATP + 2 H2O. It functions in the pathway porphyrin-containing compound metabolism; bacteriochlorophyll biosynthesis (light-independent). Component of the dark-operative protochlorophyllide reductase (DPOR) that uses Mg-ATP and reduced ferredoxin to reduce ring D of protochlorophyllide (Pchlide) to form chlorophyllide a (Chlide). This reaction is light-independent. The NB-protein (BchN-BchB) is the catalytic component of the complex. The sequence is that of Light-independent protochlorophyllide reductase subunit B from Rhodopseudomonas palustris (strain HaA2).